Here is a 380-residue protein sequence, read N- to C-terminus: MTIIRKKHPLIKIINHSFIDLPAPSNISSWWNFGSLLGLCLIIQILTGLFLAMHYTSDTATAFSSVTHICRDVNYGWLIRYMHANGASMFFICLFLHVGRGIYYGSYNMIETWNMGIVLLFAVMATAFMGYVLPWGQMSFWGATVITNLLSAIPYIGTTLVEWIWGGFSVDKATLTRFFAFHFILPFIITALVLVHLLFLHETGSNNPTGLNSDADKIPFHPYYTIKDFLGVLILLMAFMILTLFFPDILGDPDNYTPANPLNTPPHIKPEWYFLFAYAILRSIPNKLGGVLALILSIVILAFMPLLHTSKQRALTFRPITQTMYWILVADLLVLTWIGGQPVEYPFIIIGQTASIAYFAIIVILMPMAGMFENNIMDLD.

The next 4 helical transmembrane spans lie at 33–53 (FGSL…FLAM), 77–98 (WLIR…FLHV), 113–133 (WNMG…GYVL), and 178–198 (FFAF…VHLL). Residues His-83 and His-97 each coordinate heme b. Heme b contacts are provided by His-182 and His-196. Residue His-201 coordinates a ubiquinone. Transmembrane regions (helical) follow at residues 226 to 246 (IKDF…TLFF), 288 to 308 (LGGV…PLLH), 320 to 340 (ITQT…WIGG), and 347 to 367 (FIII…ILMP).

Belongs to the cytochrome b family. As to quaternary structure, the cytochrome bc1 complex contains 11 subunits: 3 respiratory subunits (MT-CYB, CYC1 and UQCRFS1), 2 core proteins (UQCRC1 and UQCRC2) and 6 low-molecular weight proteins (UQCRH/QCR6, UQCRB/QCR7, UQCRQ/QCR8, UQCR10/QCR9, UQCR11/QCR10 and a cleavage product of UQCRFS1). This cytochrome bc1 complex then forms a dimer. The cofactor is heme b.

It localises to the mitochondrion inner membrane. Its function is as follows. Component of the ubiquinol-cytochrome c reductase complex (complex III or cytochrome b-c1 complex) that is part of the mitochondrial respiratory chain. The b-c1 complex mediates electron transfer from ubiquinol to cytochrome c. Contributes to the generation of a proton gradient across the mitochondrial membrane that is then used for ATP synthesis. The chain is Cytochrome b (MT-CYB) from Microtus guentheri (Gunther's vole).